The sequence spans 123 residues: Large ribosomal subunit protein uL14 (123 aa).

Belongs to the universal ribosomal protein uL14 family. In terms of assembly, part of the 50S ribosomal subunit. Forms a cluster with proteins L3 and L19. In the 70S ribosome, L14 and L19 interact and together make contacts with the 16S rRNA in bridges B5 and B8.

Functionally, binds to 23S rRNA. Forms part of two intersubunit bridges in the 70S ribosome. In Photorhabdus laumondii subsp. laumondii (strain DSM 15139 / CIP 105565 / TT01) (Photorhabdus luminescens subsp. laumondii), this protein is Large ribosomal subunit protein uL14.